The sequence spans 250 residues: Thermostable monoacylglycerol lipase (250 aa).

Phe-29 contacts substrate. The active-site Nucleophile is the Ser-97. Met-98 provides a ligand contact to substrate. Catalysis depends on charge relay system residues Asp-196 and His-226.

It belongs to the lipase/esterase LIP3/BchO family. Monomer.

It catalyses the reaction Hydrolyzes glycerol monoesters of long-chain fatty acids.. With respect to regulation, not inhibited by cholate, but slightly inhibited by triton X-100 and deoxycholate. Completely inhibited by PMSF (phenylmethylsulfonyl fluoride) at a concentration of 200 uM. Hydrolyzes monoacylglycerols, with the highest activity occurring with 1-monolauroylglycerol. The sequence is that of Thermostable monoacylglycerol lipase from Bacillus sp. (strain H-257).